A 159-amino-acid chain; its full sequence is Transcriptional repressor NrdR (159 aa).

The span at 1–11 shows a compositional bias: polar residues; it reads MQCPTCQNTDS. The segment at 1–21 is disordered; it reads MQCPTCQNTDSRVLESRSADS. A zinc finger lies at 3–34; the sequence is CPTCQNTDSRVLESRSADSGKSVRRRRECLNC. Residues 49–139 form the ATP-cone domain; the sequence is VSVLKKDGSR…VYRKFNGVKD (91 aa).

Belongs to the NrdR family. Requires Zn(2+) as cofactor.

Functionally, negatively regulates transcription of bacterial ribonucleotide reductase nrd genes and operons by binding to NrdR-boxes. The sequence is that of Transcriptional repressor NrdR from Prochlorococcus marinus (strain MIT 9301).